The primary structure comprises 390 residues: 8-amino-7-oxononanoate synthase (390 aa).

Arginine 19 contacts substrate. Position 106–107 (glycine 106–tyrosine 107) interacts with pyridoxal 5'-phosphate. Substrate is bound at residue histidine 131. Positions 176, 204, and 233 each coordinate pyridoxal 5'-phosphate. Residue lysine 236 is modified to N6-(pyridoxal phosphate)lysine. Threonine 350 lines the substrate pocket.

This sequence belongs to the class-II pyridoxal-phosphate-dependent aminotransferase family. BioF subfamily. As to quaternary structure, homodimer. Pyridoxal 5'-phosphate serves as cofactor.

The catalysed reaction is 6-carboxyhexanoyl-[ACP] + L-alanine + H(+) = (8S)-8-amino-7-oxononanoate + holo-[ACP] + CO2. The protein operates within cofactor biosynthesis; biotin biosynthesis. In terms of biological role, catalyzes the decarboxylative condensation of pimeloyl-[acyl-carrier protein] and L-alanine to produce 8-amino-7-oxononanoate (AON), [acyl-carrier protein], and carbon dioxide. This chain is 8-amino-7-oxononanoate synthase, found in Pseudomonas putida (strain GB-1).